The following is a 50-amino-acid chain: MAPPQHLCGSHLVDALYLVCGDRGFFYNSGIVEQCCHRPCDKFDLQSYCN.

3 cysteine pairs are disulfide-bonded: C8–C36, C20–C49, and C35–C40.

The protein belongs to the insulin family. In terms of assembly, heterodimer of a B chain and an A chain linked by two disulfide bonds.

It is found in the secreted. Its function is as follows. Insulin decreases blood glucose concentration. It increases cell permeability to monosaccharides, amino acids and fatty acids. It accelerates glycolysis, the pentose phosphate cycle, and glycogen synthesis in liver. The chain is Insulin 2 (ins2) from Batrachoididae sp. (Toadfish).